We begin with the raw amino-acid sequence, 481 residues long: tRNA:m(4)X modification enzyme TRM13 homolog (481 aa).

Residues 56–83 (RILCPLDPKHTVYEDQLAKHLKKCNSRE) form a CHHC U11-48K-type zinc finger. Residues cysteine 59, histidine 65, histidine 75, and cysteine 79 each coordinate Zn(2+). Positions 113–140 (SLSEEQLENLIKKLRKASEGLNSTHEDH) form a coiled coil. Disordered stretches follow at residues 296–319 (AKRI…SEKD) and 379–414 (LEGS…TDSL). A compositionally biased stretch (basic and acidic residues) spans 385–407 (TPERKDAQRDENEEHDDGGDRLT).

Belongs to the methyltransferase TRM13 family.

It carries out the reaction cytidine(4) in tRNA(Pro) + S-adenosyl-L-methionine = 2'-O-methylcytidine(4) in tRNA(Pro) + S-adenosyl-L-homocysteine + H(+). The enzyme catalyses cytidine(4) in tRNA(Gly)(GCC) + S-adenosyl-L-methionine = 2'-O-methylcytidine(4) in tRNA(Gly)(GCC) + S-adenosyl-L-homocysteine + H(+). The catalysed reaction is adenosine(4) in tRNA(His) + S-adenosyl-L-methionine = 2'-O-methyladenosine(4) in tRNA(His) + S-adenosyl-L-homocysteine + H(+). In terms of biological role, tRNA methylase which 2'-O-methylates cytidine(4) in tRNA(Pro) and tRNA(Gly)(GCC), and adenosine(4) in tRNA(His). The chain is tRNA:m(4)X modification enzyme TRM13 homolog (Trmt13) from Mus musculus (Mouse).